Here is a 625-residue protein sequence, read N- to C-terminus: MLSRVKEGAREKIIKVIESLAPGWKGEIEFKDTPSPELGDFGTPVAFKLARVMKKPPFQIAELIVEELKKELPEGIREVRAINGYVNFFVDYGYLARQLIVEVLEKGDRFGSSDIGRGKKVIVEHTSVNPTKPLHMGHARNAILGDSMARILRFLGYEVEVQNYIDDLGIQFAQVYWGYLKLREKFEKIMKELKEKGIKEDPIDHVLGLLYVEVNRVLEENPEIEAEIRDIMKKLESGELNGRELAESVVRAQMVTTYRLGIKYDLLVWESDIVSRKLFEIAVKLLERNENFYTPNEGKYKGAFVMDLSKLFPDMKNPYLVLRRSDGTATYTGKDIAYHLWKFGKIDVDLLYKPWDEHTWTTAPDGESVKGKFGGADIVINVIGAEQRHPQMAIKHALKLLGFEDAAENLHHLAYEHVERPEGKFSGRKGTWVGFTVDEVINEAIKRARELIEEKSPGLSDEEKEEIAEKVGVGAIRYNMVKYSPDKKIIFRWEDVLNFEGESAPYIQYAHARCSSILRKAGNPEWEALLKEANFKELTERERELIILLSKFPEVVEQAGRDVKPHLIAWYANELASLFNKFYMDHPVIKAEKGIREARLLLVMAVRQVLRNSLWLLGIEAPDRM.

The 'HIGH' region motif lies at 128–138 (VNPTKPLHMGH).

It belongs to the class-I aminoacyl-tRNA synthetase family.

Its subcellular location is the cytoplasm. It carries out the reaction tRNA(Arg) + L-arginine + ATP = L-arginyl-tRNA(Arg) + AMP + diphosphate. This is Arginine--tRNA ligase (argS) from Pyrococcus abyssi (strain GE5 / Orsay).